The chain runs to 125 residues: Large ribosomal subunit protein bL19 (125 aa).

This sequence belongs to the bacterial ribosomal protein bL19 family.

This protein is located at the 30S-50S ribosomal subunit interface and may play a role in the structure and function of the aminoacyl-tRNA binding site. The protein is Large ribosomal subunit protein bL19 of Ehrlichia canis (strain Jake).